The chain runs to 475 residues: tRNA-2-methylthio-N(6)-dimethylallyladenosine synthase (475 aa).

The 118-residue stretch at 3–120 (KKLHIKTWGC…LPEMIDQIRA (118 aa)) folds into the MTTase N-terminal domain. The [4Fe-4S] cluster site is built by Cys12, Cys49, Cys83, Cys157, Cys161, and Cys164. One can recognise a Radical SAM core domain in the interval 143–375 (RADGPSAFVS…QDRITQQAMR (233 aa)). The TRAM domain occupies 378–441 (RQMVGTVQRI…TNSLRGVFIR (64 aa)).

The protein belongs to the methylthiotransferase family. MiaB subfamily. Monomer. [4Fe-4S] cluster is required as a cofactor.

The protein resides in the cytoplasm. The enzyme catalyses N(6)-dimethylallyladenosine(37) in tRNA + (sulfur carrier)-SH + AH2 + 2 S-adenosyl-L-methionine = 2-methylsulfanyl-N(6)-dimethylallyladenosine(37) in tRNA + (sulfur carrier)-H + 5'-deoxyadenosine + L-methionine + A + S-adenosyl-L-homocysteine + 2 H(+). Its function is as follows. Catalyzes the methylthiolation of N6-(dimethylallyl)adenosine (i(6)A), leading to the formation of 2-methylthio-N6-(dimethylallyl)adenosine (ms(2)i(6)A) at position 37 in tRNAs that read codons beginning with uridine. This chain is tRNA-2-methylthio-N(6)-dimethylallyladenosine synthase, found in Shewanella halifaxensis (strain HAW-EB4).